Consider the following 545-residue polypeptide: Intercellular adhesion molecule 1 (545 aa).

A signal peptide spans 1–27; sequence MASTRARPMLPLLLVLVAVVIPGPVGA. Residues 28–492 lie on the Extracellular side of the membrane; it reads QVSIHPTEAF…HLTVLYHDQN (465 aa). Ig-like C2-type domains are found at residues 41 to 103 and 128 to 193; these read GGSV…QSSA and GKNL…LDLR. Residue asparagine 47 is glycosylated (N-linked (GlcNAc...) asparagine). Intrachain disulfides connect cysteine 48-cysteine 92, cysteine 52-cysteine 96, and cysteine 135-cysteine 186. N-linked (GlcNAc...) asparagine glycosylation occurs at asparagine 154. Residues 177–179 carry the Cell attachment site motif; that stretch reads RGD. N-linked (GlcNAc...) asparagine glycans are attached at residues asparagine 183 and asparagine 202. Residues 230–297 form the Ig-like C2-type 3 domain; the sequence is GTQQKFLCSL…LRCVLELADQ (68 aa). Residues cysteine 237 and cysteine 290 are joined by a disulfide bond. N-linked (GlcNAc...) asparagine glycosylation is found at asparagine 309, asparagine 344, asparagine 396, asparagine 417, asparagine 439, and asparagine 464. The Ig-like C2-type 4 domain maps to 325–389; that stretch reads GDQVTVKCEA…FFCSAALEVD (65 aa). Cysteine 332 and cysteine 382 are oxidised to a cystine. A disordered region spans residues 343 to 365; sequence LNSTSPRPPTSQGTSPRPPTSQI. 3 disulfide bridges follow: cysteine 414–cysteine 430, cysteine 430–cysteine 469, and cysteine 442–cysteine 469. In terms of domain architecture, Ig-like C2-type 5 spans 423–476; that stretch reads GSQQTLTCQPQGNPAPNLTCSRKADGVPLPIGMVKSVKREMNGTYKCRAFSSRG. A helical transmembrane segment spans residues 493–517; sequence TWVIIVGVLVLIIAGFVIVASIYTY. Residues 518–545 are Cytoplasmic-facing; sequence YRQRKIRIYKLQKAQEEALKLKVQAPPP.

The protein belongs to the immunoglobulin superfamily. ICAM family. As to quaternary structure, homodimer. Interacts with MUC1 and promotes cell aggregation in epithelial cells. Interacts with ARHGEF26/SGEF. Interacts (on T cell side) with CD81, CD247 and CD9 at immunological synapses between antigen-presenting cells and T cells. Post-translationally, monoubiquitinated, which is promoted by MARCH9 and leads to endocytosis.

The protein resides in the membrane. Its function is as follows. ICAM proteins are ligands for the leukocyte adhesion protein LFA-1 (integrin alpha-L/beta-2). During leukocyte trans-endothelial migration, ICAM1 engagement promotes the assembly of endothelial apical cups through ARHGEF26/SGEF and RHOG activation. The protein is Intercellular adhesion molecule 1 (Icam1) of Rattus norvegicus (Rat).